A 198-amino-acid polypeptide reads, in one-letter code: Mitrocomin (198 aa).

Residues 1 to 8 (MSMGSRYA) constitute a propeptide that is removed on maturation. 3 consecutive EF-hand domains span residues 19 to 54 (KWIA…IICK), 118 to 147 (DALF…AGIQ), and 148 to 183 (QSRG…FWYS). D32, N34, N36, Q38, E43, D125, D127, N129, S131, E136, D161, D163, D165, K167, and E172 together coordinate Ca(2+).

This sequence belongs to the aequorin family.

Functionally, ca(2+)-dependent bioluminescence photoprotein. Displays an emission peak at 470 nm (blue light). Trace amounts of calcium ion trigger the intramolecular oxidation of the chromophore, coelenterazine into coelenteramide and CO(2) with the concomitant emission of light. This chain is Mitrocomin (MI17), found in Mitrocoma cellularia (Cross jellyfish).